The following is a 272-amino-acid chain: Acidic leucine-rich nuclear phosphoprotein 32-related protein 2 (272 aa).

LRR repeat units lie at residues Ser57–Pro78, Ala79–Ala100, and Thr106–Ala127. The LRRCT domain occupies Cys139–Glu184. The interval Gly163 to Asn272 is disordered. The span at Met164–Glu241 shows a compositional bias: acidic residues. Polar residues predominate over residues Ser248–Pro257.

Belongs to the ANP32 family.

This Oryza sativa subsp. japonica (Rice) protein is Acidic leucine-rich nuclear phosphoprotein 32-related protein 2.